A 608-amino-acid chain; its full sequence is ABC transporter ATP-binding protein RamB (608 aa).

The next 5 membrane-spanning stretches (helical) occupy residues G25–G45, L66–F86, G141–L161, A166–L186, and A253–L273. Residues L30–P296 enclose the ABC transmembrane type-1 domain. A disordered region spans residues G321–S362. Residues P324–P336 are compositionally biased toward acidic residues. Low complexity predominate over residues E351–S362. The region spanning V376–H605 is the ABC transporter domain. An ATP-binding site is contributed by G410–S417.

This sequence belongs to the ABC transporter superfamily.

Its subcellular location is the cell membrane. Functionally, probably involved in exporting SapB from the cell. Expression of the ram locus (ramA, ramB and ramR) induces rapid aerial mycelium formation in S.lividans. This is ABC transporter ATP-binding protein RamB from Streptomyces coelicolor (strain ATCC BAA-471 / A3(2) / M145).